Consider the following 280-residue polypeptide: MKRVFGVFGDPVGHSLSPAMHNSAFSALGMDCIYHAFRVRPENLRKAILGAEAMGFGGLNLTVPLKEEALKLDFIRPDPLAERIGAVNTVVFSETGEIRGYNTDGLGARQALLEAAVEIRGSKVVVAGAGGAARAVAFQLAADGAEITVVNRTEERAVELAKDVAAASLPGKINGTGLSGLKELLRDADILINTTTLGMHPNTDTTIATAEELHSGLTVFDIVYNPLETRLLKEAKVAGAKTVSGVLMLVYQGAEAFKLWTGVEAPAELMKKTVLEALQA.

Residues 15 to 17 (SLS) and Thr62 each bind shikimate. The active-site Proton acceptor is Lys66. 2 residues coordinate shikimate: Asn88 and Asp104. Residues 128-132 (GAGGA), 151-156 (NRTEER), and Ile222 contribute to the NADP(+) site. Tyr224 is a shikimate binding site. Residue Gly245 coordinates NADP(+).

This sequence belongs to the shikimate dehydrogenase family. As to quaternary structure, homodimer.

The enzyme catalyses shikimate + NADP(+) = 3-dehydroshikimate + NADPH + H(+). It functions in the pathway metabolic intermediate biosynthesis; chorismate biosynthesis; chorismate from D-erythrose 4-phosphate and phosphoenolpyruvate: step 4/7. Functionally, involved in the biosynthesis of the chorismate, which leads to the biosynthesis of aromatic amino acids. Catalyzes the reversible NADPH linked reduction of 3-dehydroshikimate (DHSA) to yield shikimate (SA). The chain is Shikimate dehydrogenase (NADP(+)) from Methanosarcina acetivorans (strain ATCC 35395 / DSM 2834 / JCM 12185 / C2A).